A 506-amino-acid polypeptide reads, in one-letter code: ATP synthase subunit alpha (506 aa).

Position 170-177 (170-177 (GDRQTGKT)) interacts with ATP.

Belongs to the ATPase alpha/beta chains family. As to quaternary structure, F-type ATPases have 2 components, CF(1) - the catalytic core - and CF(0) - the membrane proton channel. CF(1) has five subunits: alpha(3), beta(3), gamma(1), delta(1), epsilon(1). CF(0) has four main subunits: a(1), b(1), b'(1) and c(9-12).

The protein localises to the cellular thylakoid membrane. It carries out the reaction ATP + H2O + 4 H(+)(in) = ADP + phosphate + 5 H(+)(out). Its function is as follows. Produces ATP from ADP in the presence of a proton gradient across the membrane. The alpha chain is a regulatory subunit. In Synechococcus sp. (strain JA-2-3B'a(2-13)) (Cyanobacteria bacterium Yellowstone B-Prime), this protein is ATP synthase subunit alpha.